Consider the following 146-residue polypeptide: Hemoglobin subunit beta-2 (146 aa).

The region spanning 2-146 (FLSAEEKGLV…VASALAHRYH (145 aa)) is the Globin domain. Lysine 17 carries the N6-succinyllysine modification. Serine 44 and serine 50 each carry phosphoserine. Lysine 59 is modified (N6-succinyllysine). Residues histidine 63 and histidine 92 each coordinate heme b. Arginine 104 carries the asymmetric dimethylarginine modification.

Belongs to the globin family. As to quaternary structure, heterotetramer of two alpha chains and two beta chains. Red blood cells.

Functionally, involved in oxygen transport from the lung to the various peripheral tissues. The polypeptide is Hemoglobin subunit beta-2 (HBB2) (Panthera pardus saxicolor (Northern Persian leopard)).